A 208-amino-acid polypeptide reads, in one-letter code: MARYRGPVERLERRLGVDLGLKGERRLAGKSALEKRPYAPGQHGQRRTKISEYGLQLQEKQKAKFMYGTSEKQFRALYKEANRKEGNTGSILIQLLEQRLDNVVYRMGFATTRASARQFVNHGHVLVDGKRVDIPSYRVKAGQKIEIREKSKTNSQILRAIELTNQTGMVEWVDVDKEKLFGIFSRVPEREEIAIPVEERLIVELYSK.

The region spanning 98 to 161 (QRLDNVVYRM…KTNSQILRAI (64 aa)) is the S4 RNA-binding domain.

The protein belongs to the universal ribosomal protein uS4 family. As to quaternary structure, part of the 30S ribosomal subunit. Contacts protein S5. The interaction surface between S4 and S5 is involved in control of translational fidelity.

Functionally, one of the primary rRNA binding proteins, it binds directly to 16S rRNA where it nucleates assembly of the body of the 30S subunit. Its function is as follows. With S5 and S12 plays an important role in translational accuracy. In Sulfurovum sp. (strain NBC37-1), this protein is Small ribosomal subunit protein uS4.